The primary structure comprises 381 residues: Putative F-box/kelch-repeat protein At3g17570 (381 aa).

The F-box domain maps to 1–45; it reads MFTDLPRDLETEILSRVPATSLQKLKPTCKRWYTLFKDPEFLKKH. 3 Kelch repeats span residues 151 to 199, 229 to 281, and 331 to 379; these read SYKI…TLKG, LLYQ…KIVE, and RFYI…GGKR.

The protein is Putative F-box/kelch-repeat protein At3g17570 of Arabidopsis thaliana (Mouse-ear cress).